A 245-amino-acid chain; its full sequence is tRNA (guanine-N(1)-)-methyltransferase (245 aa).

Residues Gly114 and 134 to 139 each bind S-adenosyl-L-methionine; that span reads IGDYIL.

This sequence belongs to the RNA methyltransferase TrmD family. As to quaternary structure, homodimer.

The protein resides in the cytoplasm. It catalyses the reaction guanosine(37) in tRNA + S-adenosyl-L-methionine = N(1)-methylguanosine(37) in tRNA + S-adenosyl-L-homocysteine + H(+). Specifically methylates guanosine-37 in various tRNAs. This is tRNA (guanine-N(1)-)-methyltransferase from Listeria monocytogenes serotype 4b (strain CLIP80459).